The primary structure comprises 287 residues: Nucleotide-binding protein HD_0584 (287 aa).

Residue 8–15 (GRSGSGKS) coordinates ATP. 56–59 (DIRN) lines the GTP pocket.

The protein belongs to the RapZ-like family.

Functionally, displays ATPase and GTPase activities. This Haemophilus ducreyi (strain 35000HP / ATCC 700724) protein is Nucleotide-binding protein HD_0584.